We begin with the raw amino-acid sequence, 278 residues long: HTH-type transcriptional activator RhaS (278 aa).

In terms of domain architecture, HTH araC/xylS-type spans 174–272; that stretch reads NQLLAWLEDH…DWSPRDIRQG (99 aa). 2 consecutive DNA-binding regions (H-T-H motif) follow at residues 191–212 and 239–262; these read ESIA…KQQT and VTDI…RREF.

In terms of assembly, binds DNA as a dimer.

It localises to the cytoplasm. In terms of biological role, activates expression of the rhaBAD and rhaT operons. The polypeptide is HTH-type transcriptional activator RhaS (Citrobacter koseri (strain ATCC BAA-895 / CDC 4225-83 / SGSC4696)).